Consider the following 210-residue polypeptide: Ribosomal RNA large subunit methyltransferase E (210 aa).

S-adenosyl-L-methionine is bound by residues G60, W62, D80, D96, and D122. Catalysis depends on K162, which acts as the Proton acceptor.

The protein belongs to the class I-like SAM-binding methyltransferase superfamily. RNA methyltransferase RlmE family.

It is found in the cytoplasm. It carries out the reaction uridine(2552) in 23S rRNA + S-adenosyl-L-methionine = 2'-O-methyluridine(2552) in 23S rRNA + S-adenosyl-L-homocysteine + H(+). Functionally, specifically methylates the uridine in position 2552 of 23S rRNA at the 2'-O position of the ribose in the fully assembled 50S ribosomal subunit. This chain is Ribosomal RNA large subunit methyltransferase E, found in Dichelobacter nodosus (strain VCS1703A).